The primary structure comprises 264 residues: Tryptophan synthase alpha chain (264 aa).

Catalysis depends on proton acceptor residues Glu49 and Asp60.

It belongs to the TrpA family. As to quaternary structure, tetramer of two alpha and two beta chains.

It carries out the reaction (1S,2R)-1-C-(indol-3-yl)glycerol 3-phosphate + L-serine = D-glyceraldehyde 3-phosphate + L-tryptophan + H2O. The protein operates within amino-acid biosynthesis; L-tryptophan biosynthesis; L-tryptophan from chorismate: step 5/5. In terms of biological role, the alpha subunit is responsible for the aldol cleavage of indoleglycerol phosphate to indole and glyceraldehyde 3-phosphate. The polypeptide is Tryptophan synthase alpha chain (Microcystis aeruginosa (strain NIES-843 / IAM M-2473)).